Reading from the N-terminus, the 402-residue chain is Acetate kinase (402 aa).

Asn7 serves as a coordination point for Mg(2+). An ATP-binding site is contributed by Lys14. Arg95 is a binding site for substrate. Asp152 serves as the catalytic Proton donor/acceptor. Residues 212–216 (HLGNG), 286–288 (DMR), and 334–338 (GIGEN) contribute to the ATP site. Glu388 serves as a coordination point for Mg(2+).

The protein belongs to the acetokinase family. In terms of assembly, homodimer. Requires Mg(2+) as cofactor. Mn(2+) is required as a cofactor.

The protein localises to the cytoplasm. It catalyses the reaction acetate + ATP = acetyl phosphate + ADP. It participates in metabolic intermediate biosynthesis; acetyl-CoA biosynthesis; acetyl-CoA from acetate: step 1/2. Its function is as follows. Catalyzes the formation of acetyl phosphate from acetate and ATP. Can also catalyze the reverse reaction. The chain is Acetate kinase from Nitratidesulfovibrio vulgaris (strain DP4) (Desulfovibrio vulgaris).